A 537-amino-acid chain; its full sequence is Multidrug resistance protein Stp (537 aa).

A run of 14 helical transmembrane segments spans residues 6-26 (LLTLIATGLGLFMIFLDALIV), 46-66 (WVVASYSLGMAVFIMSAATLA), 77-97 (IGVSLFTLGSIACGLAPSIAV), 104-124 (AQGLGAAAVSVTSLALVSAAF), 136-156 (IWTAIASIGTTTGPTLGGLLV), 163-183 (SIFYVNLPMGALVLFLTLCYV), 200-220 (LLFIVAVGALVYAVIEGPQIG), 223-243 (SVQTIVMLWTAAVGCALFVWL), 262-282 (YALAIATICTVFFAVYGMLLL), 300-320 (LMILPFSAAVAIVSPLVGHLV), 327-347 (VPILAGLCMLMLGLLMLIFSE), 352-372 (ALVLVGLGLCGSGVALCLTPI), 397-417 (AIGSTIGFAVLGSVLAAWLSA), and 478-498 (VALLVATATLAVVFLAGWRWF).

It belongs to the major facilitator superfamily. EmrB family.

The protein resides in the cell membrane. This Mycobacterium tuberculosis (strain CDC 1551 / Oshkosh) protein is Multidrug resistance protein Stp (stp).